Here is a 174-residue protein sequence, read N- to C-terminus: UPF0316 protein Dhaf_3052 (174 aa).

The next 3 membrane-spanning stretches (helical) occupy residues 4–24 (ILQF…LTTI), 35–55 (VYAS…LSII), and 59–79 (LDSY…VYLG).

It belongs to the UPF0316 family.

The protein localises to the cell membrane. In Desulfitobacterium hafniense (strain DSM 10664 / DCB-2), this protein is UPF0316 protein Dhaf_3052.